Reading from the N-terminus, the 125-residue chain is Small ribosomal subunit protein bS6m (125 aa).

Belongs to the bacterial ribosomal protein bS6 family. As to quaternary structure, component of the mitochondrial ribosome small subunit (28S) which comprises a 12S rRNA and about 30 distinct proteins.

Its subcellular location is the mitochondrion. The polypeptide is Small ribosomal subunit protein bS6m (Mrps6) (Mus musculus (Mouse)).